A 79-amino-acid polypeptide reads, in one-letter code: Large ribosomal subunit protein bL31 (79 aa).

Residues cysteine 16, cysteine 18, cysteine 37, and cysteine 40 each coordinate Zn(2+).

The protein belongs to the bacterial ribosomal protein bL31 family. Type A subfamily. Part of the 50S ribosomal subunit. Zn(2+) serves as cofactor.

In terms of biological role, binds the 23S rRNA. This chain is Large ribosomal subunit protein bL31, found in Coxiella burnetii (strain CbuG_Q212) (Coxiella burnetii (strain Q212)).